We begin with the raw amino-acid sequence, 327 residues long: Biotin synthase (327 aa).

Residues 49-282 enclose the Radical SAM core domain; the sequence is FNKDKIDLCS…NKVIRLCGGR (234 aa). [4Fe-4S] cluster contacts are provided by cysteine 67, cysteine 71, and cysteine 74. [2Fe-2S] cluster is bound by residues serine 110, cysteine 142, cysteine 201, and arginine 277.

It belongs to the radical SAM superfamily. Biotin synthase family. As to quaternary structure, homodimer. Requires [4Fe-4S] cluster as cofactor. It depends on [2Fe-2S] cluster as a cofactor.

It carries out the reaction (4R,5S)-dethiobiotin + (sulfur carrier)-SH + 2 reduced [2Fe-2S]-[ferredoxin] + 2 S-adenosyl-L-methionine = (sulfur carrier)-H + biotin + 2 5'-deoxyadenosine + 2 L-methionine + 2 oxidized [2Fe-2S]-[ferredoxin]. The protein operates within cofactor biosynthesis; biotin biosynthesis; biotin from 7,8-diaminononanoate: step 2/2. Its function is as follows. Catalyzes the conversion of dethiobiotin (DTB) to biotin by the insertion of a sulfur atom into dethiobiotin via a radical-based mechanism. This Methanococcus maripaludis (strain C5 / ATCC BAA-1333) protein is Biotin synthase.